The following is a 130-amino-acid chain: Small ribosomal subunit protein uS11c (130 aa).

It belongs to the universal ribosomal protein uS11 family. As to quaternary structure, part of the 30S ribosomal subunit.

It is found in the plastid. The protein resides in the chloroplast. This chain is Small ribosomal subunit protein uS11c, found in Tupiella akineta (Green alga).